Consider the following 351-residue polypeptide: Leukotriene B4 receptor 1 (351 aa).

Topologically, residues 1 to 21 are extracellular; it reads MAANTTSTAATSSPGGMSLSL. N-linked (GlcNAc...) asparagine glycosylation occurs at asparagine 4. Residues 22–44 traverse the membrane as a helical segment; the sequence is LPIVLLSVALVVGLPGNSFVVWS. Residues 45–56 are Cytoplasmic-facing; that stretch reads ILKRMQKRSVTA. The chain crosses the membrane as a helical span at residues 57–77; the sequence is LLVLNLALADLAVLLTAPFFL. Residues 78-93 are Extracellular-facing; that stretch reads HFLARGTWSFEVTGCR. Residues 94–115 traverse the membrane as a helical segment; that stretch reads LCHYVCGVSMYASVLLITIMSL. The Cytoplasmic portion of the chain corresponds to 116–140; the sequence is DRSLAVARPFVSQKVRTKAFARWVL. Residues 141-161 traverse the membrane as a helical segment; it reads AGIWVVSFLLAIPVLVYRTVT. The Extracellular segment spans residues 162–179; that stretch reads PKNKTLICDSRYPSDGHK. An N-linked (GlcNAc...) asparagine glycan is attached at asparagine 164. Residues 180–200 traverse the membrane as a helical segment; sequence VFHLLFEAITGFLLPFLAVVA. Over 201–222 the chain is Cytoplasmic; the sequence is SYSDIGRRLQARRFRRSRRTGR. Residues 223-243 traverse the membrane as a helical segment; sequence LVVLIILAFAAFWLPYHLVNL. The Extracellular portion of the chain corresponds to 244 to 268; that stretch reads VEAGRTLAGWDKNSPAGQRLKLARY. Residues 269–289 form a helical membrane-spanning segment; it reads VLIALAFLSSSVNPVLYACAG. Residues 290-351 are Cytoplasmic-facing; sequence GGLLRSAGVG…TSSTPPESSK (62 aa). Composition is skewed to polar residues over residues 311 to 327 and 339 to 351; these read EVSS…TPKA and SFMT…ESSK. Residues 311–351 form a disordered region; that stretch reads EVSSTRRGGTLVQTPKATPTCPEPGPTDSFMTSSTPPESSK.

This sequence belongs to the G-protein coupled receptor 1 family. In terms of processing, phosphorylated by GRK6 upon leukotriene B4 binding; which promotes desensitization. Exclusively expressed in polymorphonuclear leukocytes.

The protein resides in the cell membrane. Functionally, receptor for leukotriene B4, a potent chemoattractant involved in inflammation and immune response. The polypeptide is Leukotriene B4 receptor 1 (Ltb4r) (Rattus norvegicus (Rat)).